A 217-amino-acid chain; its full sequence is Octanoyltransferase (217 aa).

The 176-residue stretch at 32-207 folds into the BPL/LPL catalytic domain; the sequence is NDSPDELWIV…TLSQLLGYQH (176 aa). Residues 71–78, 138–140, and 151–153 contribute to the substrate site; these read RGGQVTYH, SLG, and GLA. The active-site Acyl-thioester intermediate is the C169.

This sequence belongs to the LipB family.

It is found in the cytoplasm. It carries out the reaction octanoyl-[ACP] + L-lysyl-[protein] = N(6)-octanoyl-L-lysyl-[protein] + holo-[ACP] + H(+). It participates in protein modification; protein lipoylation via endogenous pathway; protein N(6)-(lipoyl)lysine from octanoyl-[acyl-carrier-protein]: step 1/2. Catalyzes the transfer of endogenously produced octanoic acid from octanoyl-acyl-carrier-protein onto the lipoyl domains of lipoate-dependent enzymes. Lipoyl-ACP can also act as a substrate although octanoyl-ACP is likely to be the physiological substrate. In Shewanella oneidensis (strain ATCC 700550 / JCM 31522 / CIP 106686 / LMG 19005 / NCIMB 14063 / MR-1), this protein is Octanoyltransferase.